Reading from the N-terminus, the 391-residue chain is Formate-dependent phosphoribosylglycinamide formyltransferase (391 aa).

N(1)-(5-phospho-beta-D-ribosyl)glycinamide contacts are provided by residues 18–19 (EL) and E78. ATP contacts are provided by residues R110, K151, 156–161 (SSGKGQ), 191–194 (EEFI), and E199. The 191-residue stretch at 115–305 (DLASKDLKIK…EFELHLRAFL (191 aa)) folds into the ATP-grasp domain. 2 residues coordinate Mg(2+): E264 and E276. N(1)-(5-phospho-beta-D-ribosyl)glycinamide contacts are provided by residues D283, K353, and 360–361 (RR).

This sequence belongs to the PurK/PurT family. Homodimer.

It catalyses the reaction N(1)-(5-phospho-beta-D-ribosyl)glycinamide + formate + ATP = N(2)-formyl-N(1)-(5-phospho-beta-D-ribosyl)glycinamide + ADP + phosphate + H(+). It functions in the pathway purine metabolism; IMP biosynthesis via de novo pathway; N(2)-formyl-N(1)-(5-phospho-D-ribosyl)glycinamide from N(1)-(5-phospho-D-ribosyl)glycinamide (formate route): step 1/1. Functionally, involved in the de novo purine biosynthesis. Catalyzes the transfer of formate to 5-phospho-ribosyl-glycinamide (GAR), producing 5-phospho-ribosyl-N-formylglycinamide (FGAR). Formate is provided by PurU via hydrolysis of 10-formyl-tetrahydrofolate. In Prochlorococcus marinus (strain MIT 9301), this protein is Formate-dependent phosphoribosylglycinamide formyltransferase.